Reading from the N-terminus, the 764-residue chain is FAST kinase domain-containing protein 5, mitochondrial (764 aa).

The N-terminal 27 residues, 1 to 27, are a transit peptide targeting the mitochondrion; that stretch reads MAATLKSLKLVRYRAFCSPSAFGAVRS. Position 95 is a phosphoserine (serine 95). Lysine 507 is modified (N6-acetyllysine). The 61-residue stretch at 697–757 folds into the RAP domain; it reads LAVQFTNRNQ…RLEKLAFLHE (61 aa).

This sequence belongs to the FAST kinase family. Found in a complex with GRSF1, DDX28, DHX30 and FASTKD2. Associates with the 12S mitochondrial rRNA (12S mt-rRNA). Expression detected in spleen, thymus, testis, ovary, colon, heart, smooth muscle, kidney, brain, lung, liver and white adipose tissue with highest expression in heart, smooth muscle, liver and thyroid.

Its subcellular location is the mitochondrion matrix. It localises to the mitochondrion nucleoid. In terms of biological role, plays an important role in the processing of non-canonical mitochondrial mRNA precursors. The protein is FAST kinase domain-containing protein 5, mitochondrial (FASTKD5) of Homo sapiens (Human).